Reading from the N-terminus, the 140-residue chain is Ribosome maturation factor RimP (140 aa).

This sequence belongs to the RimP family.

The protein resides in the cytoplasm. Required for maturation of 30S ribosomal subunits. This Campylobacter lari (strain RM2100 / D67 / ATCC BAA-1060) protein is Ribosome maturation factor RimP.